A 287-amino-acid chain; its full sequence is Large ribosomal subunit protein uL2 (287 aa).

The segment at 221 to 287 (RGSVMNPCDH…SKRSRGGRDS (67 aa)) is disordered. The span at 258–287 (KTRKRNKPSNRYVLRKRRKTSKRSRGGRDS) shows a compositional bias: basic residues.

It belongs to the universal ribosomal protein uL2 family. Part of the 50S ribosomal subunit. Forms a bridge to the 30S subunit in the 70S ribosome.

One of the primary rRNA binding proteins. Required for association of the 30S and 50S subunits to form the 70S ribosome, for tRNA binding and peptide bond formation. It has been suggested to have peptidyltransferase activity; this is somewhat controversial. Makes several contacts with the 16S rRNA in the 70S ribosome. The polypeptide is Large ribosomal subunit protein uL2 (Parasynechococcus marenigrum (strain WH8102)).